The primary structure comprises 811 residues: tRNA(Met) cytidine acetyltransferase TmcA (811 aa).

Q267 and R440 together coordinate ATP. Residues 474–663 (RKEVYLEEPD…GEFTAIVLKP (190 aa)) form the N-acetyltransferase domain. Acetyl-CoA contacts are provided by residues 590–592 (IAT), E630, and R637.

This sequence belongs to the TmcA family.

It is found in the cytoplasm. It catalyses the reaction cytidine(34) in elongator tRNA(Met) + acetyl-CoA + ATP + H2O = N(4)-acetylcytidine(34) in elongator tRNA(Met) + ADP + phosphate + CoA + H(+). The catalysed reaction is a cytidine in RNA + acetyl-CoA + ATP + H2O = an N(4)-acetylcytidine in RNA + ADP + phosphate + CoA + H(+). The enzyme catalyses a cytidine in tRNA + acetyl-CoA + ATP + H2O = an N(4)-acetylcytidine in tRNA + ADP + phosphate + CoA + H(+). It carries out the reaction a cytidine in mRNA + acetyl-CoA + ATP + H2O = an N(4)-acetylcytidine in mRNA + ADP + phosphate + CoA + H(+). Functionally, catalyzes the formation of N(4)-acetylcytidine (ac(4)C) at the wobble position of tRNA(Met), by using acetyl-CoA as an acetyl donor and ATP (or GTP). Its function is as follows. Catalyzes the formation of 404 N(4)-acetylcytidine (ac(4)C) sites in RNA, almost always on the middle C of a CCG motif. There 173 ac(4)C sites in rRNA, 35 in non-coding (nc)RNA, 119 in mRNA and 77 in tRNA. More acetylation is observed at 85 and 95 than at 65 or 75 degrees Celsius. The chain is tRNA(Met) cytidine acetyltransferase TmcA from Thermococcus kodakarensis (strain ATCC BAA-918 / JCM 12380 / KOD1) (Pyrococcus kodakaraensis (strain KOD1)).